The sequence spans 565 residues: Protein unc-87 (565 aa).

Low complexity predominate over residues 1-27; sequence MLSFNNTTSASSFQSASSRYLMSSSSS. Disordered regions lie at residues 1–83 and 237–262; these read MLSF…TTNS and IPSQ…RNTN. Over residues 54–69 the composition is skewed to basic and acidic residues; that stretch reads EALERLRPNTASRERN. 3 Calponin-like repeats span residues 237–262, 285–310, and 338–363; these read IPSQ…RNTN, VRLQ…RDVC, and VRLQ…RRET. Residues 250-262 are compositionally biased toward polar residues; sequence KLMTNFGTPRNTN. The segment covering 369 to 381 has biased composition (basic and acidic residues); it reads SKHPEYDHEKPDQ. The interval 369 to 400 is disordered; it reads SKHPEYDHEKPDQSEIPLQSGTNKFASQKGMT. Residues 384-398 show a composition bias toward polar residues; the sequence is IPLQSGTNKFASQKG. Calponin-like repeat units lie at residues 384–409, 431–456, 472–497, and 517–542; these read IPLQ…RRET, IPSQ…RWEV, VRLQ…RNTT, and IPSQ…RDVK.

The protein belongs to the calponin family. In terms of assembly, monomer. Interacts with F-actin. Interacts with myosin. Expressed in the body wall muscles. Isoform a: Expression in the pharynx, anal depressor muscle, uterine muscle, vulva and unidentified neurons in the head and the ventral region. Isoform b: Expression in the body wall muscles, spermatheca, vulva and in the myoepithelial sheath.

The protein localises to the cytoplasm. It is found in the myofibril. It localises to the sarcomere. The protein resides in the i band. Thin filament-associated protein that is implicated in actin bundling and actin filament dynamics. Exhibits F-actin cross-linking activity. Required for the maintenance of sarcomeric actin organization in striated muscles. Competes with unc-60 isoform b for actin binding and protects actin filaments from depolymerization by unc-60, thereby contributing to actin filament stability. Cooperates with myosin to form actomyosin bundles and inhibits actomyosin ATPase activity and actomyosin motility. Might protect the myofilaments from mechanical stress. Its function is as follows. Acts as a negative regulator of myosin-dependent contractility of smooth muscle-like cells in the somatic gonad. This Caenorhabditis elegans protein is Protein unc-87 (unc-87).